A 375-amino-acid polypeptide reads, in one-letter code: Digeranylgeranylglycerophospholipid reductase 1 (375 aa).

Positions 13, 32, 43, 44, 46, 92, 116, 275, 287, and 288 each coordinate FAD. Gly367 contacts a 2,3-bis-O-(geranylgeranyl)-sn-glycerol 1-phospholipid.

The protein belongs to the geranylgeranyl reductase family. DGGGPL reductase subfamily. Requires FAD as cofactor.

It catalyses the reaction a 2,3-bis-O-phytanyl-sn-glycerol 1-phospholipid + 8 A = a 2,3-bis-O-(geranylgeranyl)-sn-glycerol 1-phospholipid + 8 AH2. The catalysed reaction is 2,3-bis-O-(phytanyl)-sn-glycerol 1-phosphate + 8 A = 2,3-bis-O-(geranylgeranyl)-sn-glycerol 1-phosphate + 8 AH2. The enzyme catalyses CDP-2,3-bis-O-(geranylgeranyl)-sn-glycerol + 8 AH2 = CDP-2,3-bis-O-(phytanyl)-sn-glycerol + 8 A. It carries out the reaction archaetidylserine + 8 AH2 = 2,3-bis-O-phytanyl-sn-glycero-3-phospho-L-serine + 8 A. Its pathway is membrane lipid metabolism; glycerophospholipid metabolism. Is involved in the reduction of 2,3-digeranylgeranylglycerophospholipids (unsaturated archaeols) into 2,3-diphytanylglycerophospholipids (saturated archaeols) in the biosynthesis of archaeal membrane lipids. Catalyzes the formation of archaetidic acid (2,3-di-O-phytanyl-sn-glyceryl phosphate) from 2,3-di-O-geranylgeranylglyceryl phosphate (DGGGP) via the hydrogenation of each double bond of the isoprenoid chains. Is also probably able to reduce double bonds of geranyl groups in CDP-2,3-bis-O-(geranylgeranyl)-sn-glycerol and archaetidylserine, thus acting at various stages in the biosynthesis of archaeal membrane lipids. This chain is Digeranylgeranylglycerophospholipid reductase 1, found in Methanopyrus kandleri (strain AV19 / DSM 6324 / JCM 9639 / NBRC 100938).